A 212-amino-acid chain; its full sequence is uncharacterized protein (212 aa).

Belongs to the IIV-6 309L family.

This is an uncharacterized protein from Aedes vexans (Inland floodwater mosquito).